The following is a 750-amino-acid chain: Photosystem I P700 chlorophyll a apoprotein A1 (750 aa).

Helical transmembrane passes span 70–93 (VFSAHFGQLSIIFLWLSGMYFHGA), 156–179 (LYCTAIGALVFAALMLFAGWFHYH), 195–219 (LNHHLAGLLGLGSLSWAGHQVHVSL), 291–309 (IAHHHLAIAILFLIAGHMY), 346–369 (WHAQLSLNLAMLGSLTIIVAHHMY), 385–411 (LSLFTHHMWIGGFLIVGAAAHAAIFMV), 433–455 (AIISHLNWVCIFLGFHSFGLYIH), and 531–549 (FLVHHIHAFTIHVTVLILL). Residues cysteine 573 and cysteine 582 each contribute to the [4Fe-4S] cluster site. 2 helical membrane-spanning segments follow: residues 589 to 610 (HVFLGLFWMYNAISVVIFHFSW) and 664 to 686 (LSAYGLFFLGAHFVWAFSLMFLF). A chlorophyll a'-binding site is contributed by histidine 675. Methionine 683 and tyrosine 691 together coordinate chlorophyll a. Phylloquinone is bound at residue tryptophan 692. The chain crosses the membrane as a helical span at residues 724–744 (AVGVTHYLLGGIATTWAFFLA).

Belongs to the PsaA/PsaB family. As to quaternary structure, the PsaA/B heterodimer binds the P700 chlorophyll special pair and subsequent electron acceptors. PSI consists of a core antenna complex that captures photons, and an electron transfer chain that converts photonic excitation into a charge separation. The eukaryotic PSI reaction center is composed of at least 11 subunits. It depends on P700 is a chlorophyll a/chlorophyll a' dimer, A0 is one or more chlorophyll a, A1 is one or both phylloquinones and FX is a shared 4Fe-4S iron-sulfur center. as a cofactor.

The protein resides in the plastid. Its subcellular location is the chloroplast thylakoid membrane. The catalysed reaction is reduced [plastocyanin] + hnu + oxidized [2Fe-2S]-[ferredoxin] = oxidized [plastocyanin] + reduced [2Fe-2S]-[ferredoxin]. Its function is as follows. PsaA and PsaB bind P700, the primary electron donor of photosystem I (PSI), as well as the electron acceptors A0, A1 and FX. PSI is a plastocyanin-ferredoxin oxidoreductase, converting photonic excitation into a charge separation, which transfers an electron from the donor P700 chlorophyll pair to the spectroscopically characterized acceptors A0, A1, FX, FA and FB in turn. Oxidized P700 is reduced on the lumenal side of the thylakoid membrane by plastocyanin. The polypeptide is Photosystem I P700 chlorophyll a apoprotein A1 (Olimarabidopsis pumila (Dwarf rocket)).